A 379-amino-acid chain; its full sequence is Cobalt-precorrin-5B C(1)-methyltransferase (379 aa).

The protein belongs to the CbiD family.

The catalysed reaction is Co-precorrin-5B + S-adenosyl-L-methionine = Co-precorrin-6A + S-adenosyl-L-homocysteine. It participates in cofactor biosynthesis; adenosylcobalamin biosynthesis; cob(II)yrinate a,c-diamide from sirohydrochlorin (anaerobic route): step 6/10. In terms of biological role, catalyzes the methylation of C-1 in cobalt-precorrin-5B to form cobalt-precorrin-6A. This is Cobalt-precorrin-5B C(1)-methyltransferase from Citrobacter koseri (strain ATCC BAA-895 / CDC 4225-83 / SGSC4696).